The sequence spans 364 residues: Fructose-bisphosphate aldolase A (364 aa).

Tyr-5 carries the phosphotyrosine modification. Position 9 is a phosphothreonine (Thr-9). Ser-36 and Ser-39 each carry phosphoserine. The residue at position 42 (Lys-42) is an N6-acetyllysine; alternate. Lys-42 is covalently cross-linked (Glycyl lysine isopeptide (Lys-Gly) (interchain with G-Cter in SUMO1); alternate). Lys-42 participates in a covalent cross-link: Glycyl lysine isopeptide (Lys-Gly) (interchain with G-Cter in SUMO2); alternate. Arg-43 is a beta-D-fructose 1,6-bisphosphate binding site. Ser-46 carries the post-translational modification Phosphoserine. The residue at position 99 (Lys-99) is an N6-(2-hydroxyisobutyryl)lysine. N6-acetyllysine is present on Lys-108. At Lys-111 the chain carries N6-acetyllysine; alternate. Position 111 is an N6-malonyllysine; alternate (Lys-111). The residue at position 132 (Ser-132) is a Phosphoserine. Lys-147 carries the post-translational modification N6-(2-hydroxyisobutyryl)lysine. The active-site Proton acceptor is Glu-188. Lys-230 functions as the Schiff-base intermediate with dihydroxyacetone-P in the catalytic mechanism. Position 272 is a phosphoserine (Ser-272). Beta-D-fructose 1,6-bisphosphate contacts are provided by residues Ser-272–Gly-274, Ser-301, and Arg-304. Position 312 is an N6-malonyllysine (Lys-312). Position 330 is an N6-acetyllysine (Lys-330).

The protein belongs to the class I fructose-bisphosphate aldolase family. Homotetramer. Interacts with SNX9 and WAS. Interacts with FBP2; the interaction blocks FBP2 inhibition by physiological concentrations of AMP and reduces inhibition by Ca(2+). In terms of tissue distribution, expressed in muscle, brain and hepatoma cells.

Its subcellular location is the cytoplasm. The protein localises to the myofibril. It localises to the sarcomere. The protein resides in the i band. It is found in the m line. It carries out the reaction beta-D-fructose 1,6-bisphosphate = D-glyceraldehyde 3-phosphate + dihydroxyacetone phosphate. The protein operates within carbohydrate degradation; glycolysis; D-glyceraldehyde 3-phosphate and glycerone phosphate from D-glucose: step 4/4. Functionally, catalyzes the reversible conversion of beta-D-fructose 1,6-bisphosphate (FBP) into two triose phosphate and plays a key role in glycolysis and gluconeogenesis. In addition, may also function as scaffolding protein. This chain is Fructose-bisphosphate aldolase A (Aldoa), found in Rattus norvegicus (Rat).